The chain runs to 669 residues: Soluble guanylate cyclase 89Db (669 aa).

Position 104 (histidine 104) interacts with heme. Positions 430–458 form a coiled coil; it reads QHCSKLEIMFEKEEQRSDELEKSLELADS. The 127-residue stretch at 494–620 folds into the Guanylate cyclase domain; the sequence is SVIFIEVMNI…DTVNTASRME (127 aa).

It belongs to the adenylyl cyclase class-4/guanylyl cyclase family. Heterodimer; with Gyc88E, in the presence of magnesium or manganese. It depends on heme as a cofactor. Expressed in embryos in a segmental pattern in the ventral nerve cord (VNC) and in the brain, beginning at stage 13 and continuing through to stage 17. Colocalized with Gyc-89Db in several peripheral neurons that innervate trachea, basiconical sensilla and the sensory cones in the posterior segments of the embryo. Expression in wandering 3rd instar larvae is most prominent in a small cluster of cells located in the anterior medial region of each brain lobe. In the VNC, expression is found in scattered cells both laterally and at the midline.

It is found in the cytoplasm. The catalysed reaction is GTP = 3',5'-cyclic GMP + diphosphate. Its activity is regulated as follows. Probably not activated by nitric oxide (NO). Heterodimer exhibits some stimulation, compounds (SIN-1 and two of the NONOates) that were ineffective at stimulating Gyc-88E homodimer did stimulate the heterodimer. Its function is as follows. Heterodimers with Gyc88E are activated in response to changing oxygen concentrations, alerting flies to hypoxic environments. Under normal oxygen concentrations, oxygen binds to the heme group and results in low levels of guanylyl cyclase activity. When exposed to reduced oxygen concentrations, the oxygen dissociates from the heme group resulting in activation of the enzyme. The sequence is that of Soluble guanylate cyclase 89Db from Drosophila melanogaster (Fruit fly).